The following is a 394-amino-acid chain: Purine ribonucleoside efflux pump NepI (394 aa).

The Cytoplasmic portion of the chain corresponds to 1–21; that stretch reads MSEFIAENRGADAITRPNWSA. The helical transmembrane segment at 22–42 threads the bilayer; sequence VFSVAFCVACLIIVEFLPVSL. Over 43–54 the chain is Periplasmic; the sequence is LTPMAQDLGISE. A helical membrane pass occupies residues 55–75; the sequence is GVAGQSVTVTAFVAMFASLFI. Over 76-85 the chain is Cytoplasmic; the sequence is TQTIQATDRR. Residues 86 to 106 form a helical membrane-spanning segment; it reads YVVILFAVLLTISCLLVSFAN. Position 107 (Ser107) is a topological domain, periplasmic. A helical membrane pass occupies residues 108–128; that stretch reads FSLLLIGRACLGLALGGFWAM. Residues 129 to 147 lie on the Cytoplasmic side of the membrane; sequence SASLTMRLVPPRTVPKALS. The helical transmembrane segment at 148–168 threads the bilayer; the sequence is VIFGAVSIALVIAAPLGSFLG. The Periplasmic segment spans residues 169 to 175; the sequence is ELIGWRN. A helical membrane pass occupies residues 176–196; it reads VFNAAAVMGVLCIFWIIKSLP. Topologically, residues 197-215 are cytoplasmic; sequence SLPGKPSHQKQNTFRLLQR. A helical membrane pass occupies residues 216-236; that stretch reads PGVMAGMIAIFMSFAGQFAFF. The Periplasmic segment spans residues 237–255; sequence TYIRPVYMNLAGFGVDGLT. The helical transmembrane segment at 256 to 276 threads the bilayer; the sequence is LVLLSFGIASFIGTSLSSFIL. Residues 277-281 are Cytoplasmic-facing; it reads KRSVK. Residues 282 to 302 form a helical membrane-spanning segment; it reads LALAGAPLILAVSALVLTLCG. Residues 303-305 are Periplasmic-facing; it reads SDK. The helical transmembrane segment at 306–326 threads the bilayer; it reads IVATGVAIIWGLTFALVPVGW. The Cytoplasmic segment spans residues 327 to 343; that stretch reads STWSTRSLADQAEKAGS. The chain crosses the membrane as a helical span at residues 344–364; the sequence is IQVAVIQLANTCGAAIGGYAL. Topologically, residues 365–366 are periplasmic; it reads DN. A helical transmembrane segment spans residues 367–387; sequence IGLTSPLMLSGTLMLLTALLV. The Cytoplasmic portion of the chain corresponds to 388-394; it reads TAKVKMK.

It belongs to the major facilitator superfamily. DHA1 family. NepI (TC 2.A.1.2.26) subfamily.

It localises to the cell inner membrane. The enzyme catalyses inosine(in) + H(+)(out) = inosine(out) + H(+)(in). It carries out the reaction guanosine(in) + H(+)(out) = guanosine(out) + H(+)(in). In terms of biological role, involved in the efflux of purine ribonucleosides, such as inosine and guanosine. This Shigella dysenteriae serotype 1 (strain Sd197) protein is Purine ribonucleoside efflux pump NepI.